Consider the following 265-residue polypeptide: Basic leucine zipper 6 (265 aa).

2 disordered regions span residues 1–24 (MAQL…SAGG) and 77–139 (LMSM…RDPK). Residues 85 to 97 (GGSSAPGSDNGGS) are compositionally biased toward low complexity. Over residues 122–132 (TQEQAAATSPT) the composition is skewed to polar residues. A bZIP domain is found at 137 to 189 (DPKRVKRILANRQSAQRSRVRKLQYISELERSVTTLQNEVSVLSPRVAFLDQQ). Residues 139–158 (KRVKRILANRQSAQRSRVRK) form a basic motif region. The leucine-zipper stretch occupies residues 165–186 (LERSVTTLQNEVSVLSPRVAFL). The disordered stretch occupies residues 239–265 (LSGGLAADHAHVHGGPPPVRAEKELMS).

As to expression, expressed in roots, shoots and panicles.

It localises to the nucleus. Its function is as follows. Transcription regulator. This Oryza sativa subsp. japonica (Rice) protein is Basic leucine zipper 6 (BZIP06).